Here is a 67-residue protein sequence, read N- to C-terminus: Large ribosomal subunit protein bL35 (67 aa).

The protein belongs to the bacterial ribosomal protein bL35 family.

The polypeptide is Large ribosomal subunit protein bL35 (Bartonella tribocorum (strain CIP 105476 / IBS 506)).